A 65-amino-acid polypeptide reads, in one-letter code: Small ribosomal subunit protein uS10 (65 aa).

It belongs to the universal ribosomal protein uS10 family. In terms of assembly, part of the 30S ribosomal subunit.

Involved in the binding of tRNA to the ribosomes. The sequence is that of Small ribosomal subunit protein uS10 (rps10) from Desulfurococcus mucosus (Desulfurococcus mobilis).